We begin with the raw amino-acid sequence, 171 residues long: uncharacterized protein (171 aa).

Residues 5-25 (FLLTIFALWVGGFGYYLYLIN) traverse the membrane as a helical segment.

It is found in the membrane. This is an uncharacterized protein from Rickettsia conorii (strain ATCC VR-613 / Malish 7).